Reading from the N-terminus, the 173-residue chain is Photosystem I assembly protein Ycf3 (173 aa).

TPR repeat units lie at residues 35-68 (AFAYYRDGMSAQADGEYSEALENYEEALRLEDDP), 72-105 (SYILYNMGLIYASNGDHHKALELYHEAIDLNPRM), and 120-153 (GEKAKQSGNEDESEALFDKAAEYWKQAIRIAPNN).

Belongs to the Ycf3 family.

The protein localises to the cellular thylakoid membrane. Its function is as follows. Essential for the assembly of the photosystem I (PSI) complex. May act as a chaperone-like factor to guide the assembly of the PSI subunits. This chain is Photosystem I assembly protein Ycf3, found in Picosynechococcus sp. (strain ATCC 27264 / PCC 7002 / PR-6) (Agmenellum quadruplicatum).